The primary structure comprises 278 residues: Probable septum site-determining protein MinC (278 aa).

Belongs to the MinC family. As to quaternary structure, interacts with MinD and FtsZ.

Its function is as follows. Cell division inhibitor that blocks the formation of polar Z ring septums. Rapidly oscillates between the poles of the cell to destabilize FtsZ filaments that have formed before they mature into polar Z rings. Prevents FtsZ polymerization. The polypeptide is Probable septum site-determining protein MinC (Gloeobacter violaceus (strain ATCC 29082 / PCC 7421)).